The sequence spans 606 residues: Scavenger receptor class A member 3 (606 aa).

The Cytoplasmic segment spans residues Met1–Arg56. The helical; Signal-anchor for type II membrane protein transmembrane segment at Ile57 to Phe77 threads the bilayer. Over Arg78 to Tyr606 the chain is Extracellular. Asn115, Asn182, Asn224, Asn257, Asn313, Asn337, Asn365, Asn400, Asn430, and Asn451 each carry an N-linked (GlcNAc...) asparagine glycan. The tract at residues Ile454 to Tyr606 is disordered. A Collagen-like 1 domain is found at Leu455–Val513. A compositionally biased stretch (low complexity) spans Asp485 to Pro519. Residues Gly526 to Gly535 are compositionally biased toward gly residues. Positions Gly544 to Gln603 constitute a Collagen-like 2 domain. 2 stretches are compositionally biased toward pro residues: residues Pro545–Ser558 and Pro591–Pro600.

As to expression, expressed ubiquitously.

The protein resides in the endoplasmic reticulum membrane. It is found in the golgi apparatus membrane. Functionally, seems to protect cells by scavenging oxidative molecules or harmful products of oxidation. This is Scavenger receptor class A member 3 (SCARA3) from Homo sapiens (Human).